The primary structure comprises 297 residues: Nucleotide-binding protein CJA_2809 (297 aa).

8-15 (GLSGSGKT) serves as a coordination point for ATP. 59-62 (DVRN) serves as a coordination point for GTP.

The protein belongs to the RapZ-like family.

In terms of biological role, displays ATPase and GTPase activities. This is Nucleotide-binding protein CJA_2809 from Cellvibrio japonicus (strain Ueda107) (Pseudomonas fluorescens subsp. cellulosa).